Here is a 503-residue protein sequence, read N- to C-terminus: UDP-N-acetylmuramoyl-L-alanyl-D-glutamate--2,6-diaminopimelate ligase (503 aa).

UDP-N-acetyl-alpha-D-muramoyl-L-alanyl-D-glutamate is bound at residue Ser32. 117 to 123 (GTNGKTT) contacts ATP. Residues 159-160 (TT), Ser186, Gln192, and Arg194 each bind UDP-N-acetyl-alpha-D-muramoyl-L-alanyl-D-glutamate. At Lys226 the chain carries N6-carboxylysine. Meso-2,6-diaminopimelate-binding positions include Arg396, 420 to 423 (DNPR), Gly471, and Glu475. The Meso-diaminopimelate recognition motif motif lies at 420–423 (DNPR).

The protein belongs to the MurCDEF family. MurE subfamily. Mg(2+) is required as a cofactor. Carboxylation is probably crucial for Mg(2+) binding and, consequently, for the gamma-phosphate positioning of ATP.

It is found in the cytoplasm. It carries out the reaction UDP-N-acetyl-alpha-D-muramoyl-L-alanyl-D-glutamate + meso-2,6-diaminopimelate + ATP = UDP-N-acetyl-alpha-D-muramoyl-L-alanyl-gamma-D-glutamyl-meso-2,6-diaminopimelate + ADP + phosphate + H(+). It functions in the pathway cell wall biogenesis; peptidoglycan biosynthesis. Its function is as follows. Catalyzes the addition of meso-diaminopimelic acid to the nucleotide precursor UDP-N-acetylmuramoyl-L-alanyl-D-glutamate (UMAG) in the biosynthesis of bacterial cell-wall peptidoglycan. The chain is UDP-N-acetylmuramoyl-L-alanyl-D-glutamate--2,6-diaminopimelate ligase from Prochlorococcus marinus (strain SARG / CCMP1375 / SS120).